We begin with the raw amino-acid sequence, 341 residues long: Pyrophosphate--fructose 6-phosphate 1-phosphotransferase (341 aa).

A diphosphate-binding site is contributed by glycine 10. Glutamate 103 is a binding site for Mg(2+). Substrate-binding positions include 125–127, arginine 162, 169–171, glutamate 221, arginine 265, and 271–274; these read TID, MGR, and HVQR. Residue aspartate 127 is the Proton acceptor of the active site.

It belongs to the phosphofructokinase type A (PFKA) family. Mixed-substrate PFK group III subfamily. In terms of assembly, homodimer or homotetramer. Requires Mg(2+) as cofactor.

The protein localises to the cytoplasm. It carries out the reaction beta-D-fructose 6-phosphate + diphosphate = beta-D-fructose 1,6-bisphosphate + phosphate + H(+). It participates in carbohydrate degradation; glycolysis; D-glyceraldehyde 3-phosphate and glycerone phosphate from D-glucose: step 3/4. With respect to regulation, non-allosteric. In terms of biological role, catalyzes the phosphorylation of D-fructose 6-phosphate, the first committing step of glycolysis. Uses inorganic phosphate (PPi) as phosphoryl donor instead of ATP like common ATP-dependent phosphofructokinases (ATP-PFKs), which renders the reaction reversible, and can thus function both in glycolysis and gluconeogenesis. Consistently, PPi-PFK can replace the enzymes of both the forward (ATP-PFK) and reverse (fructose-bisphosphatase (FBPase)) reactions. This is Pyrophosphate--fructose 6-phosphate 1-phosphotransferase from Amycolatopsis mediterranei (strain S699) (Nocardia mediterranei).